Reading from the N-terminus, the 113-residue chain is Large ribosomal subunit protein uL22 (113 aa).

It belongs to the universal ribosomal protein uL22 family. Part of the 50S ribosomal subunit.

Its function is as follows. This protein binds specifically to 23S rRNA; its binding is stimulated by other ribosomal proteins, e.g. L4, L17, and L20. It is important during the early stages of 50S assembly. It makes multiple contacts with different domains of the 23S rRNA in the assembled 50S subunit and ribosome. Functionally, the globular domain of the protein is located near the polypeptide exit tunnel on the outside of the subunit, while an extended beta-hairpin is found that lines the wall of the exit tunnel in the center of the 70S ribosome. The polypeptide is Large ribosomal subunit protein uL22 (Halalkalibacterium halodurans (strain ATCC BAA-125 / DSM 18197 / FERM 7344 / JCM 9153 / C-125) (Bacillus halodurans)).